A 306-amino-acid chain; its full sequence is 17-beta-hydroxysteroid dehydrogenase type 3 (306 aa).

44 to 73 is a binding site for NADP(+); the sequence is GQWAVITGAGDGIGKAYSFELARHGLNVVL. A substrate-binding site is contributed by serine 181. The Proton acceptor role is filled by tyrosine 194.

It belongs to the short-chain dehydrogenases/reductases (SDR) family. 17-beta-HSD 3 subfamily.

It localises to the endoplasmic reticulum. The enzyme catalyses a 17beta-hydroxy steroid + NADP(+) = a 17-oxo steroid + NADPH + H(+). It catalyses the reaction testosterone + NADP(+) = androst-4-ene-3,17-dione + NADPH + H(+). It carries out the reaction 17beta-estradiol + NADP(+) = estrone + NADPH + H(+). The catalysed reaction is 3beta-hydroxyandrost-5-en-17-one + NADPH + H(+) = androst-5-en-3beta,17beta-diol + NADP(+). The enzyme catalyses 17beta-hydroxy-5alpha-androstan-3-one + NADP(+) = 5alpha-androstan-3,17-dione + NADPH + H(+). It catalyses the reaction androsterone + NADPH + H(+) = 5alpha-androstane-3alpha,17beta-diol + NADP(+). It carries out the reaction 3beta-hydroxy-5alpha-androstan-17-one + NADPH + H(+) = 5alpha-androstane-3beta,17beta-diol + NADP(+). The catalysed reaction is androst-4-ene-3,11,17-trione + NADPH + H(+) = 17beta-hydroxyandrost-4-ene-3,11-dione + NADP(+). The enzyme catalyses 11beta-hydroxyandrost-4-ene-3,17-dione + NADPH + H(+) = 11beta,17beta-dihydroxyandrost-4-ene-3-one + NADP(+). Its pathway is hormone biosynthesis; testosterone biosynthesis. It participates in steroid metabolism. Catalyzes the conversion of 17-oxosteroids to 17beta-hydroxysteroids. Favors the reduction of androstenedione to testosterone. Testosterone is the key androgen driving male development and function. Uses NADPH while the two other EDH17B enzymes use NADH. Androgens such as epiandrosterone, dehydroepiandrosterone, androsterone and androstanedione are accepted as substrates and reduced at C-17. Can reduce 11-ketoandrostenedione as well as 11beta-hydroxyandrostenedione at C-17 to the respective testosterone forms. Plays a role in the rate-limiting-step for the maximum level of testosterone production by the testis but does not affect basal testosterone production. In Rattus norvegicus (Rat), this protein is 17-beta-hydroxysteroid dehydrogenase type 3.